Consider the following 730-residue polypeptide: Polyribonucleotide nucleotidyltransferase (730 aa).

Mg(2+)-binding residues include aspartate 494 and aspartate 500. The KH domain occupies 561–622; the sequence is PRIQTIQIDP…EAMNRAIQEI (62 aa). Positions 642 to 711 constitute an S1 motif domain; it reads GKIYTGRVTG…RSGKVRLSRK (70 aa).

Belongs to the polyribonucleotide nucleotidyltransferase family. Mg(2+) is required as a cofactor.

Its subcellular location is the cytoplasm. It carries out the reaction RNA(n+1) + phosphate = RNA(n) + a ribonucleoside 5'-diphosphate. Its function is as follows. Involved in mRNA degradation. Catalyzes the phosphorolysis of single-stranded polyribonucleotides processively in the 3'- to 5'-direction. In Opitutus terrae (strain DSM 11246 / JCM 15787 / PB90-1), this protein is Polyribonucleotide nucleotidyltransferase.